The following is a 636-amino-acid chain: MIQPGELLRTIHSPEELRKLDETQLIQVSEELRQFIVDNVSVYGGHFAASLGVVELTVALHYVFNTPVDQLVWDVGHQAYGHKILTGRMENFHTNRTYNGLSGFPKRSESPYDTFGVGHSSTSISAALGMAVASQYQKDNRQHIAVIGDGALTGGMAFEAMNHAGVTNSNLLIVLNDNCMAIDPNVGALKDYLVDITTSRTYNRVRDEVWNMLGKISKFGPNAQAIASKVESGLKASLLKQSNLFESLHIRYFGPVDGHDLNHLVQVLNDLKDIPGPKILHTLTVKGKGYALAEKDQVKWHAPGKFDKVTGQIHVKTYDTPQAPKYQDVFGNTIIELAEKNDKIMGITPAMPSGCSLNLMMEKMPDRAFDVGIAEQHAVTFSAGLATQGLIPFCNIYSTFMQRAYDQVIHDVCIQNLHVIFCLDRAGFAGVDGPTHHGAYDLAFFRCIPNLVVSAPMNEQELRNLMYTAQLQKNKGPFSIRYPRGQGVMPNWKTPFEEITIGKGRKVSDGDDVAILSIGHIGNYVIEAKALLREEELSPAHFDMRFVKPIDEEMLHLVFKKFKKIITVEDGCLMGGFGSAVLEFMADNNYAAQVIRLGIPDRIVEHGEQAELHKECGFDPQSIARTVRNLSGVVLK.

Thiamine diphosphate-binding positions include His-77 and 118–120; that span reads GHS. Asp-149 is a Mg(2+) binding site. Residues 150–151, Asn-178, Tyr-290, and Glu-375 contribute to the thiamine diphosphate site; that span reads GA. Asn-178 serves as a coordination point for Mg(2+).

The protein belongs to the transketolase family. DXPS subfamily. As to quaternary structure, homodimer. Requires Mg(2+) as cofactor. The cofactor is thiamine diphosphate.

The enzyme catalyses D-glyceraldehyde 3-phosphate + pyruvate + H(+) = 1-deoxy-D-xylulose 5-phosphate + CO2. It functions in the pathway metabolic intermediate biosynthesis; 1-deoxy-D-xylulose 5-phosphate biosynthesis; 1-deoxy-D-xylulose 5-phosphate from D-glyceraldehyde 3-phosphate and pyruvate: step 1/1. Its function is as follows. Catalyzes the acyloin condensation reaction between C atoms 2 and 3 of pyruvate and glyceraldehyde 3-phosphate to yield 1-deoxy-D-xylulose-5-phosphate (DXP). This Cytophaga hutchinsonii (strain ATCC 33406 / DSM 1761 / CIP 103989 / NBRC 15051 / NCIMB 9469 / D465) protein is 1-deoxy-D-xylulose-5-phosphate synthase.